Reading from the N-terminus, the 452-residue chain is Bifunctional protein GlmU (452 aa).

The tract at residues 1–232 (MTARNSLTIV…EDEVRGINTK (232 aa)) is pyrophosphorylase. UDP-N-acetyl-alpha-D-glucosamine contacts are provided by residues 11–14 (LAAG), Lys25, Gln78, and 83–84 (GT). Asp108 is a binding site for Mg(2+). Residues Gly144, Glu158, Asn173, and Asn230 each contribute to the UDP-N-acetyl-alpha-D-glucosamine site. A Mg(2+)-binding site is contributed by Asn230. The linker stretch occupies residues 233-253 (AQLAEAETVMQTRLRLAAMAA). An N-acetyltransferase region spans residues 254–452 (GVTLIAPETV…KSRHRKPKAH (199 aa)). Residues Arg319 and Lys337 each coordinate UDP-N-acetyl-alpha-D-glucosamine. Residue His349 is the Proton acceptor of the active site. UDP-N-acetyl-alpha-D-glucosamine-binding residues include Tyr352 and Asn363. Acetyl-CoA-binding positions include Ala366, 372 to 373 (NY), Ser391, Ser409, and Arg426.

This sequence in the N-terminal section; belongs to the N-acetylglucosamine-1-phosphate uridyltransferase family. In the C-terminal section; belongs to the transferase hexapeptide repeat family. Homotrimer. Mg(2+) is required as a cofactor.

It localises to the cytoplasm. The catalysed reaction is alpha-D-glucosamine 1-phosphate + acetyl-CoA = N-acetyl-alpha-D-glucosamine 1-phosphate + CoA + H(+). It carries out the reaction N-acetyl-alpha-D-glucosamine 1-phosphate + UTP + H(+) = UDP-N-acetyl-alpha-D-glucosamine + diphosphate. The protein operates within nucleotide-sugar biosynthesis; UDP-N-acetyl-alpha-D-glucosamine biosynthesis; N-acetyl-alpha-D-glucosamine 1-phosphate from alpha-D-glucosamine 6-phosphate (route II): step 2/2. It participates in nucleotide-sugar biosynthesis; UDP-N-acetyl-alpha-D-glucosamine biosynthesis; UDP-N-acetyl-alpha-D-glucosamine from N-acetyl-alpha-D-glucosamine 1-phosphate: step 1/1. Its pathway is bacterial outer membrane biogenesis; LPS lipid A biosynthesis. Functionally, catalyzes the last two sequential reactions in the de novo biosynthetic pathway for UDP-N-acetylglucosamine (UDP-GlcNAc). The C-terminal domain catalyzes the transfer of acetyl group from acetyl coenzyme A to glucosamine-1-phosphate (GlcN-1-P) to produce N-acetylglucosamine-1-phosphate (GlcNAc-1-P), which is converted into UDP-GlcNAc by the transfer of uridine 5-monophosphate (from uridine 5-triphosphate), a reaction catalyzed by the N-terminal domain. The polypeptide is Bifunctional protein GlmU (Rhodopseudomonas palustris (strain ATCC BAA-98 / CGA009)).